The chain runs to 228 residues: LexA repressor (228 aa).

The segment at residues 26–46 (FDEMKEALDLRSKSGIHRLIT) is a DNA-binding region (H-T-H motif). Catalysis depends on for autocatalytic cleavage activity residues serine 149 and lysine 187.

It belongs to the peptidase S24 family. In terms of assembly, homodimer.

The enzyme catalyses Hydrolysis of Ala-|-Gly bond in repressor LexA.. In terms of biological role, represses a number of genes involved in the response to DNA damage (SOS response), including recA and lexA. In the presence of single-stranded DNA, RecA interacts with LexA causing an autocatalytic cleavage which disrupts the DNA-binding part of LexA, leading to derepression of the SOS regulon and eventually DNA repair. In Jannaschia sp. (strain CCS1), this protein is LexA repressor.